We begin with the raw amino-acid sequence, 137 residues long: ATP synthase epsilon chain (137 aa).

This sequence belongs to the ATPase epsilon chain family. As to quaternary structure, F-type ATPases have 2 components, CF(1) - the catalytic core - and CF(0) - the membrane proton channel. CF(1) has five subunits: alpha(3), beta(3), gamma(1), delta(1), epsilon(1). CF(0) has three main subunits: a, b and c.

Its subcellular location is the cell membrane. In terms of biological role, produces ATP from ADP in the presence of a proton gradient across the membrane. In Streptococcus agalactiae serotype Ia (strain ATCC 27591 / A909 / CDC SS700), this protein is ATP synthase epsilon chain.